A 655-amino-acid chain; its full sequence is A-type voltage-gated potassium channel KCND3 (655 aa).

At 1–182 (MAAGVAAWLP…FENPHTSTLA (182 aa)) the chain is on the cytoplasmic side. The interaction with KCNIP1 and KCNIP2 stretch occupies residues 6 to 21 (AAWLPFARAAAIGWMP). The interval 70–78 (EKEFFFNED) is interaction with KCNIP1. Zn(2+) contacts are provided by His-104, Cys-110, Cys-131, and Cys-132. At Ser-153 the chain carries Phosphoserine. A helical transmembrane segment spans residues 183–204 (LVFYYVTGFFIAVSVITNVVET). Topologically, residues 205 to 223 (VPCGTVPGSKELPCGERYS) are extracellular. A helical transmembrane segment spans residues 224–246 (VAFFCLDTACVMIFTVEYLLRLF). Over 247-253 (AAPSRYR) the chain is Cytoplasmic. Residues 254–277 (FIRSVMSIIDVVAIMPYYIGLVMT) form a helical membrane-spanning segment. Residues 278 to 283 (NNEDVS) lie on the Extracellular side of the membrane. Residues 284–306 (GAFVTLRVFRVFRIFKFSRHSQG) form a helical; Voltage-sensor membrane-spanning segment. Topologically, residues 307–318 (LRILGYTLKSCA) are cytoplasmic. A helical transmembrane segment spans residues 319-343 (SELGFLLFSLTMAIIIFATVMFYAE). At 344-352 (KGSSASKFT) the chain is on the extracellular side. Positions 353–366 (SIPASFWYTIVTMT) form an intramembrane region, helical. K(+) contacts are provided by Thr-367, Leu-368, Gly-369, and Tyr-370. Positions 367–372 (TLGYGD) match the Selectivity filter motif. An intramembrane segment occupies 367-374 (TLGYGDMV). A helical transmembrane segment spans residues 378–400 (IAGKIFGSICSLSGVLVIALPVP). Over 401–655 (VIVSNFSRIY…ASNVVKVSVL (255 aa)) the chain is Cytoplasmic. At Thr-459 the chain carries Phosphothreonine. Residues 470 to 487 (SLIESQHHHLLHCLEKTT) form an interaction with KCNIP1 and KCNIP2 region. A mediates dendritic targeting region spans residues 472 to 487 (IESQHHHLLHCLEKTT). Ser-569 is subject to Phosphoserine; by CaMK2D. Ser-585 bears the Phosphoserine mark. The tract at residues 618-644 (PAPPALTPEGETRPPPASPGPNTNIPS) is disordered.

Belongs to the potassium channel family. D (Shal) (TC 1.A.1.2) subfamily. Kv4.3/KCND3 sub-subfamily. As to quaternary structure, homotetramer. Heterotetramer with KCND2. Associates with the regulatory subunits KCNIP3 and KCNIP4. Interacts with KCNE1, KCNE2, SCN1B and KCNAB1 and DLG1. Component of heteromultimeric potassium channels. Identified in potassium channel complexes containing KCND1, KCND2, KCND3, KCNIP1, KCNIP2, KCNIP3, KCNIP4, DPP6 and DPP10. Interacts with KCNIP1; each KCNIP1 monomer interacts with two adjacent KCND3 subunits, through both the N-terminal inactivation ball of a KCND3 subunit and a C-terminal helix from the adjacent KCND3 subunit, clamping them together; this interaction stabilizes the tetrameric form and modulates the channel gating kinetics namely channel activation and inactivation kinetics and rate of recovery from inactivation. Interacts with DPP6; this interaction modulates the channel gating kinetics namely channel activation and inactivation kinetics and rate of recovery from inactivation. Interacts with KCNIP2; each KCNIP2 monomer interacts with two adjacent KCND3 subunits, through both the N-terminal inactivation ball of a KCND3 subunit and a C-terminal helix from the adjacent KCND3 subunit, clamping them together; this interaction modulates the channel gating kinetics. In terms of processing, regulated through phosphorylation at Ser-569 by CaMK2D. Detected in carotid body chemoreceptor cells and in frontal cortex.

It localises to the cell membrane. It is found in the sarcolemma. The protein localises to the cell projection. The protein resides in the dendrite. The enzyme catalyses K(+)(in) = K(+)(out). Functionally, pore-forming (alpha) subunit of voltage-gated A-type potassium channels that mediates transmembrane potassium transport in excitable membranes, in brain and heart. In cardiomyocytes, may generate the transient outward potassium current I(To). In neurons, may conduct the transient subthreshold somatodendritic A-type potassium current (ISA). Kinetics properties are characterized by fast activation at subthreshold membrane potentials, rapid inactivation, and quick recovery from inactivation. Channel properties are modulated by interactions with regulatory subunits. Interaction with the regulatory subunits KCNIP1 or KCNIP2 modulates the channel gating kinetics namely channel activation and inactivation kinetics and rate of recovery from inactivation. Likewise, interaction with DPP6 modulates the channel gating kinetics namely channel activation and inactivation kinetics. In Oryctolagus cuniculus (Rabbit), this protein is A-type voltage-gated potassium channel KCND3.